The sequence spans 224 residues: Probable 2' cyclic ADP-D-ribose synthase BdTIR (224 aa).

The TIR domain maps to 51-178 (SRYEVFINHR…RFKFALREAK (128 aa)). Residues 60 to 65 (RGVDTK) and Gly93 contribute to the NAD(+) site. Glu127 is a catalytic residue.

In terms of assembly, homodimer.

It catalyses the reaction NAD(+) + H2O = ADP-D-ribose + nicotinamide + H(+). The enzyme catalyses NADP(+) + H2O = ADP-D-ribose 2'-phosphate + nicotinamide + H(+). It carries out the reaction NAD(+) = 2'cADPR + nicotinamide + H(+). In terms of biological role, an NAD(+) hydrolase (NADase). Upon activation catalyzes cleavage of NAD(+) into ADP-D-ribose (ADPR) and nicotinamide; NAD(+) cleavage triggers a defense system that promotes cell death. In addition to ADPR, also generates a cyclization variant of cyclic ADPR termed v-cADPR (2'cADPR). Also hydrolyzes NADP(+), but not other NAD(+)-related molecules. v-cADPR activates ThsA, an NAD(+) hydrolase in B.cereus (AC J8G6Z1). Probably makes 2'cADPR; the cADPR made by this protein is bound by cmTad1 (AC P0DW61) and activates ThsA from B.cereus. Boiling cmTad1 bound to the cyclic nucleotide releases 2'cADPR, strongly suggesting it is the product of this protein. The chain is Probable 2' cyclic ADP-D-ribose synthase BdTIR from Brachypodium distachyon (Purple false brome).